The sequence spans 659 residues: Pseudouridylate synthase 7 homolog (659 aa).

M1 carries the N-acetylmethionine modification. 2 stretches are compositionally biased toward polar residues: residues 1-10 and 39-54; these read MEMTEMTSVS and CPTTGQDGIENSSLPS. The interval 1–99 is disordered; sequence MEMTEMTSVS…EEEEEEAESF (99 aa). At S10 the chain carries Phosphoserine. The segment covering 75–98 has biased composition (acidic residues); that stretch reads PSEEEEEEDGLSEEEEEEEEEAES. S125 is subject to Phosphoserine. The active-site Nucleophile is the D292. The TRUD domain occupies 368 to 578; it reads GFINYYGMQR…SGAYRKIIIR (211 aa).

Belongs to the pseudouridine synthase TruD family. Interacts with SIRT1.

The protein resides in the nucleus. The enzyme catalyses a uridine in tRNA = a pseudouridine in tRNA. The catalysed reaction is uridine(13) in tRNA = pseudouridine(13) in tRNA. It catalyses the reaction a uridine in mRNA = a pseudouridine in mRNA. Pseudouridylate synthase that catalyzes pseudouridylation of RNAs. Acts as a regulator of protein synthesis in embryonic stem cells by mediating pseudouridylation of RNA fragments derived from tRNAs (tRFs): pseudouridylated tRFs inhibit translation by targeting the translation initiation complex. Also catalyzes pseudouridylation of mRNAs: mediates pseudouridylation of mRNAs with the consensus sequence 5'-UGUAG-3'. Acts as a regulator of pre-mRNA splicing by mediating pseudouridylation of pre-mRNAs at locations associated with alternatively spliced regions. Pseudouridylation of pre-mRNAs near splice sites directly regulates mRNA splicing and mRNA 3'-end processing. In addition to mRNAs and tRNAs, binds other types of RNAs, such as snRNAs, Y RNAs and vault RNAs, suggesting that it can catalyze pseudouridylation of many RNA types. The chain is Pseudouridylate synthase 7 homolog from Bos taurus (Bovine).